Consider the following 102-residue polypeptide: Large ribosomal subunit protein bL21 (102 aa).

It belongs to the bacterial ribosomal protein bL21 family. In terms of assembly, part of the 50S ribosomal subunit. Contacts protein L20.

Functionally, this protein binds to 23S rRNA in the presence of protein L20. The sequence is that of Large ribosomal subunit protein bL21 from Latilactobacillus sakei subsp. sakei (strain 23K) (Lactobacillus sakei subsp. sakei).